A 395-amino-acid chain; its full sequence is Bone morphogenetic protein 2 (395 aa).

Residues 1-23 (MVAGTRCLLALLLPQVLLGGAAG) form the signal peptide. Residues 24–281 (LIPELGRRKF…GHPLHRREKR (258 aa)) constitute a propeptide, cleaved by PCSK5. Ser-86 carries the post-translational modification Phosphoserine. Asn-134 and Asn-199 each carry an N-linked (GlcNAc...) asparagine glycan. Residues 270–292 (GKGHPLHRREKRQAKHKQRKRLK) are disordered. A compositionally biased stretch (basic residues) spans 273 to 292 (HPLHRREKRQAKHKQRKRLK). Cystine bridges form between Cys-295/Cys-360, Cys-324/Cys-392, and Cys-328/Cys-394. The N-linked (GlcNAc...) asparagine glycan is linked to Asn-337.

It belongs to the TGF-beta family. As to quaternary structure, homodimer; disulfide-linked. Interacts with SOSTDC1. Interacts with GREM2, RGMA, RGMB and RGMC. Interacts with ASPN. Interacts with MAFP5. Interacts with FBN1 (via N-terminal domain) and FBN2. Interacts with type I receptor BMPR1A. Interacts with type II receptor BMPR2. Interacts with SCUBE3. Interacts with TNFAIP6 (primarily via Link domain); this interaction is inhibited by hyaluronan. Interacts with ERFE. Interacts with BMPR1A/ALK3; the interaction may induce HAMP expression. Forms heterodimers with BMP6 in vitro; the heterodimer then binds to its receptor BMPR1A /ALK3 and may induce HAMP expression. Interacts with TGFBR3.

The protein resides in the secreted. In terms of biological role, growth factor of the TGF-beta superfamily that plays essential roles in many developmental processes, including cardiogenesis, neurogenesis, and osteogenesis. Induces cartilage and bone formation. Initiates the canonical BMP signaling cascade by associating with type I receptor BMPR1A and type II receptor BMPR2. Once all three components are bound together in a complex at the cell surface, BMPR2 phosphorylates and activates BMPR1A. In turn, BMPR1A propagates signal by phosphorylating SMAD1/5/8 that travel to the nucleus and act as activators and repressors of transcription of target genes. Also acts to promote expression of HAMP, via the interaction with its receptor BMPR1A/ALK3. Can also signal through non-canonical pathways such as ERK/MAP kinase signaling cascade that regulates osteoblast differentiation. Also stimulates the differentiation of myoblasts into osteoblasts via the EIF2AK3-EIF2A-ATF4 pathway by stimulating EIF2A phosphorylation which leads to increased expression of ATF4 which plays a central role in osteoblast differentiation. Acts as a positive regulator of odontoblast differentiation during mesenchymal tooth germ formation, expression is repressed during the bell stage by MSX1-mediated inhibition of CTNNB1 signaling. In Oryctolagus cuniculus (Rabbit), this protein is Bone morphogenetic protein 2 (BMP2).